Consider the following 397-residue polypeptide: Tryptophan synthase beta chain (397 aa).

An N6-(pyridoxal phosphate)lysine modification is found at Lys-89.

This sequence belongs to the TrpB family. As to quaternary structure, tetramer of two alpha and two beta chains. The cofactor is pyridoxal 5'-phosphate.

It catalyses the reaction (1S,2R)-1-C-(indol-3-yl)glycerol 3-phosphate + L-serine = D-glyceraldehyde 3-phosphate + L-tryptophan + H2O. It participates in amino-acid biosynthesis; L-tryptophan biosynthesis; L-tryptophan from chorismate: step 5/5. The beta subunit is responsible for the synthesis of L-tryptophan from indole and L-serine. The chain is Tryptophan synthase beta chain from Leptospira interrogans serogroup Icterohaemorrhagiae serovar copenhageni (strain Fiocruz L1-130).